A 116-amino-acid polypeptide reads, in one-letter code: Iron-sulfur cluster assembly protein CyaY (116 aa).

The protein belongs to the frataxin family.

Involved in iron-sulfur (Fe-S) cluster assembly. May act as a regulator of Fe-S biogenesis. The chain is Iron-sulfur cluster assembly protein CyaY from Buchnera aphidicola subsp. Acyrthosiphon pisum (strain APS) (Acyrthosiphon pisum symbiotic bacterium).